A 153-amino-acid chain; its full sequence is Endoribonuclease YbeY (153 aa).

Zn(2+) is bound by residues histidine 113, histidine 117, and histidine 123.

Belongs to the endoribonuclease YbeY family. The cofactor is Zn(2+).

It localises to the cytoplasm. Its function is as follows. Single strand-specific metallo-endoribonuclease involved in late-stage 70S ribosome quality control and in maturation of the 3' terminus of the 16S rRNA. This Aliivibrio salmonicida (strain LFI1238) (Vibrio salmonicida (strain LFI1238)) protein is Endoribonuclease YbeY.